A 442-amino-acid chain; its full sequence is Trigger factor (442 aa).

Positions 176–259 (GDFISLSLYV…VNAVIEISSP (84 aa)) constitute a PPIase FKBP-type domain.

This sequence belongs to the FKBP-type PPIase family. Tig subfamily.

The protein localises to the cytoplasm. The catalysed reaction is [protein]-peptidylproline (omega=180) = [protein]-peptidylproline (omega=0). Involved in protein export. Acts as a chaperone by maintaining the newly synthesized protein in an open conformation. Functions as a peptidyl-prolyl cis-trans isomerase. The sequence is that of Trigger factor from Chlamydia trachomatis serovar L2 (strain ATCC VR-902B / DSM 19102 / 434/Bu).